The following is a 333-amino-acid chain: Glycerol-3-phosphate dehydrogenase [NAD(P)+] (333 aa).

Ser-10, Phe-11, Arg-31, and Lys-105 together coordinate NADPH. Residues Lys-105, Gly-136, and Ser-138 each coordinate sn-glycerol 3-phosphate. Ala-140 is an NADPH binding site. Sn-glycerol 3-phosphate contacts are provided by Lys-191, Asp-244, Ser-254, Arg-255, and Asn-256. Lys-191 acts as the Proton acceptor in catalysis. Arg-255 contacts NADPH. NADPH contacts are provided by Val-279 and Glu-281.

This sequence belongs to the NAD-dependent glycerol-3-phosphate dehydrogenase family.

It localises to the cytoplasm. It carries out the reaction sn-glycerol 3-phosphate + NAD(+) = dihydroxyacetone phosphate + NADH + H(+). The catalysed reaction is sn-glycerol 3-phosphate + NADP(+) = dihydroxyacetone phosphate + NADPH + H(+). It functions in the pathway membrane lipid metabolism; glycerophospholipid metabolism. Functionally, catalyzes the reduction of the glycolytic intermediate dihydroxyacetone phosphate (DHAP) to sn-glycerol 3-phosphate (G3P), the key precursor for phospholipid synthesis. This chain is Glycerol-3-phosphate dehydrogenase [NAD(P)+], found in Leptospira biflexa serovar Patoc (strain Patoc 1 / Ames).